The sequence spans 200 residues: Pyrrolidone-carboxylate peptidase (200 aa).

Residues Glu78, Cys141, and His165 contribute to the active site.

The protein belongs to the peptidase C15 family. Homotetramer.

The protein resides in the cytoplasm. The catalysed reaction is Release of an N-terminal pyroglutamyl group from a polypeptide, the second amino acid generally not being Pro.. In terms of biological role, removes 5-oxoproline from various penultimate amino acid residues except L-proline. The chain is Pyrrolidone-carboxylate peptidase from Lactobacillus acidophilus (strain ATCC 700396 / NCK56 / N2 / NCFM).